The chain runs to 71 residues: Non-structural protein 3x (71 aa).

The chain is Non-structural protein 3x from Canis lupus familiaris (Dog).